Consider the following 350-residue polypeptide: Protein RecA (350 aa).

80 to 87 is a binding site for ATP; that stretch reads GPESSGKT.

The protein belongs to the RecA family.

It localises to the cytoplasm. Functionally, can catalyze the hydrolysis of ATP in the presence of single-stranded DNA, the ATP-dependent uptake of single-stranded DNA by duplex DNA, and the ATP-dependent hybridization of homologous single-stranded DNAs. It interacts with LexA causing its activation and leading to its autocatalytic cleavage. This Chlorobium limicola (strain DSM 245 / NBRC 103803 / 6330) protein is Protein RecA.